The chain runs to 231 residues: Tegument protein UL51 homolog (231 aa).

Cys-12 is lipidated: S-palmitoyl cysteine; by host.

Belongs to the herpesviridae UL51 family. Oligomerizes. Interacts with U75; this interaction mediates U75 incorporation to virions. In terms of processing, phosphorylated. Palmitoylation is necessary for Golgi localization.

The protein resides in the virion tegument. It localises to the host cytoplasm. The protein localises to the host Golgi apparatus. Functionally, plays several roles during the time course of infection, including egress of virus particles from the perinuclear space and secondary envelopment of cytoplasmic capsids that bud into specific trans-Golgi network (TGN)-derived membranes. This chain is Tegument protein UL51 homolog (U44), found in Human herpesvirus 6B (strain Z29) (HHV-6 variant B).